Consider the following 405-residue polypeptide: Tryptophan synthase beta chain (405 aa).

An N6-(pyridoxal phosphate)lysine modification is found at K95.

The protein belongs to the TrpB family. Tetramer of two alpha and two beta chains. The cofactor is pyridoxal 5'-phosphate.

It catalyses the reaction (1S,2R)-1-C-(indol-3-yl)glycerol 3-phosphate + L-serine = D-glyceraldehyde 3-phosphate + L-tryptophan + H2O. The protein operates within amino-acid biosynthesis; L-tryptophan biosynthesis; L-tryptophan from chorismate: step 5/5. In terms of biological role, the beta subunit is responsible for the synthesis of L-tryptophan from indole and L-serine. This is Tryptophan synthase beta chain from Pseudomonas putida (strain W619).